The sequence spans 362 residues: F-box protein At1g54550 (362 aa).

Positions methionine 1 to alanine 47 constitute an F-box domain.

The sequence is that of F-box protein At1g54550 from Arabidopsis thaliana (Mouse-ear cress).